Consider the following 443-residue polypeptide: Pyrrolysine--tRNA ligase (443 aa).

The interval 103-177 (VRKAMPKSVA…PAAPVPTSAP (75 aa)) is disordered. Residues 131–177 (PAPATPVSAPAQAPAPSTGSASATSASAQRMANSAAAPAAPVPTSAP) are compositionally biased toward low complexity.

The protein belongs to the class-II aminoacyl-tRNA synthetase family.

It is found in the cytoplasm. The catalysed reaction is tRNA(Pyl) + L-pyrrolysine + ATP = L-pyrrolysyl-tRNA(Pyl) + AMP + diphosphate. In terms of biological role, catalyzes the attachment of pyrrolysine to tRNA(Pyl). Pyrrolysine is a lysine derivative encoded by the termination codon UAG. In Methanosarcina acetivorans (strain ATCC 35395 / DSM 2834 / JCM 12185 / C2A), this protein is Pyrrolysine--tRNA ligase.